Here is a 99-residue protein sequence, read N- to C-terminus: uncharacterized protein (99 aa).

The stretch at 3–68 (ERLKAITNLL…EKFDSNRKFY (66 aa)) forms a coiled coil.

This is an uncharacterized protein from Aquifex aeolicus (strain VF5).